We begin with the raw amino-acid sequence, 144 residues long: Maximins 1/H1 (144 aa).

The signal sequence occupies residues 1 to 18 (MNFKYIVAVSFLLASAYA). A propeptide spanning residues 19-43 (RSEENDEQSLSQRDVLEEESLREIR) is cleaved from the precursor. An Asparagine amide modification is found at N70. Positions 74-123 (TAEEHEVMKRLEAVMRDLDSLDYPEEAAERETRSFNQEEIANLFTKKEKR) are excised as a propeptide. L143 is modified (leucine amide).

This sequence belongs to the bombinin family. In terms of tissue distribution, expressed by the skin glands.

The protein localises to the secreted. Functionally, antibacterial peptide with amphipathic alpha-helical structure that has activity against both Gram-positive and Gram-negative bacteria. Also shows antimicrobial activity against the fungus C.albicans, but not against A.flavus nor P.uticale. It has little hemolytic activity. It possess a significant cytotoxicity against tumor cell lines, but does not possess a significant anti-HIV activity. Also shows high spermicidal activity. In terms of biological role, antibacterial peptide with activity against both Gram-positive and Gram-negative bacteria. Also shows antimicrobial activity against the fungus C.albicans. In addition, shows strong hemolytic activity. The protein is Maximins 1/H1 of Bombina maxima (Giant fire-bellied toad).